A 289-amino-acid chain; its full sequence is Energy-coupling factor transporter ATP-binding protein EcfA2 (289 aa).

The region spanning 3 to 246 (IRFKQVDFTY…TQWLKEKQLG (244 aa)) is the ABC transporter domain. 40-47 (GHTGSGKS) serves as a coordination point for ATP.

This sequence belongs to the ABC transporter superfamily. Energy-coupling factor EcfA family. In terms of assembly, forms a stable energy-coupling factor (ECF) transporter complex composed of 2 membrane-embedded substrate-binding proteins (S component), 2 ATP-binding proteins (A component) and 2 transmembrane proteins (T component).

The protein resides in the cell membrane. Functionally, ATP-binding (A) component of a common energy-coupling factor (ECF) ABC-transporter complex. Unlike classic ABC transporters this ECF transporter provides the energy necessary to transport a number of different substrates. This is Energy-coupling factor transporter ATP-binding protein EcfA2 from Enterococcus faecalis (strain ATCC 700802 / V583).